We begin with the raw amino-acid sequence, 209 residues long: Outer-membrane lipoprotein carrier protein (209 aa).

A signal peptide spans 1 to 22; that stretch reads MKKLLLTLAMVPAVLFSPTAWG.

It belongs to the LolA family. As to quaternary structure, monomer.

It localises to the periplasm. Its function is as follows. Participates in the translocation of lipoproteins from the inner membrane to the outer membrane. Only forms a complex with a lipoprotein if the residue after the N-terminal Cys is not an aspartate (The Asp acts as a targeting signal to indicate that the lipoprotein should stay in the inner membrane). This is Outer-membrane lipoprotein carrier protein from Alcanivorax borkumensis (strain ATCC 700651 / DSM 11573 / NCIMB 13689 / SK2).